The sequence spans 525 residues: GMP synthase [glutamine-hydrolyzing] (525 aa).

Residues 9–207 (RILILDFGSQ…VRDICECEAL (199 aa)) enclose the Glutamine amidotransferase type-1 domain. The active-site Nucleophile is cysteine 86. Residues histidine 181 and glutamate 183 contribute to the active site. Residues 208–400 (WTPAKIIDDA…LGLPYDMLYR (193 aa)) enclose the GMPS ATP-PPase domain. 235 to 241 (SGGVDSS) lines the ATP pocket.

In terms of assembly, homodimer.

It carries out the reaction XMP + L-glutamine + ATP + H2O = GMP + L-glutamate + AMP + diphosphate + 2 H(+). The protein operates within purine metabolism; GMP biosynthesis; GMP from XMP (L-Gln route): step 1/1. Functionally, catalyzes the synthesis of GMP from XMP. The chain is GMP synthase [glutamine-hydrolyzing] from Cronobacter sakazakii (strain ATCC BAA-894) (Enterobacter sakazakii).